The following is a 414-amino-acid chain: EARP and GARP complex-interacting protein 1 (414 aa).

N-acetylmethionine is present on methionine 1. WD repeat units lie at residues 159–199 (TAHG…SQAV), 209–249 (KGQL…QIYC), 253–293 (AHGQ…EPVK), and 297–337 (EHSH…SEPF). A disordered region spans residues 337–362 (FGHLVDDDDISDQEDHRSEEKSKEPL). Serine 347 is subject to Phosphoserine. Residues 349–362 (QEDHRSEEKSKEPL) show a composition bias toward basic and acidic residues. The stretch at 372–412 (EHEDSVYAVDWSSADPWLFASLSYDGRLVINRVPRALKYHI) is one WD 5 repeat.

The protein belongs to the WD repeat EIPR1 family. As to quaternary structure, interacts with two multisubunit tethering complexes: EARP composed of VPS50, VPS51, VPS52 and VPS53 subunits and GARP complex composed of VPS51, VPS52, VPS53 and VPS54 subunits. Interacts with SNAP29.

It is found in the golgi apparatus. It localises to the trans-Golgi network. Acts as a component of endosomal retrieval machinery that is involved in protein transport from early endosomes to either recycling endosomes or the trans-Golgi network. Mediates the recruitment of Golgi-associated retrograde protein (GARP) complex to the trans-Golgi network and controls early endosome-to-Golgi transport of internalized protein. Promotes the recycling of internalized transferrin receptor (TFRC) to the plasma membrane through interaction with endosome-associated recycling protein (EARP) complex. Controls proper insulin distribution and secretion, and retention of cargo in mature dense core vesicles. Required for the stability of the endosome-associated retrograde protein (EARP) complex subunits and for proper localization and association of EARP with membranes. The chain is EARP and GARP complex-interacting protein 1 from Pongo abelii (Sumatran orangutan).